A 129-amino-acid polypeptide reads, in one-letter code: SPbeta prophage-derived protein NrdI (129 aa).

It belongs to the NrdI family.

Its function is as follows. Probably involved in ribonucleotide reductase function. In Bacillus subtilis (strain 168), this protein is SPbeta prophage-derived protein NrdI (nrdIB).